Consider the following 2219-residue polypeptide: E3 ubiquitin-protein ligase Ubr3 (2219 aa).

Disordered stretches follow at residues Met-1–Ser-48 and Ala-78–Ser-134. Over residues Val-20 to Met-29 the composition is skewed to basic and acidic residues. Residues Glu-31–Ser-42 show a composition bias toward acidic residues. Residues Gly-114 to Ser-134 are compositionally biased toward low complexity. Residues Ala-222–Ile-293 form a UBR-type zinc finger. Disordered stretches follow at residues Ser-1348 to Val-1367 and Gln-1440 to Glu-1464. Acidic residues predominate over residues Asp-1353–Val-1367. The segment at Cys-1607–Arg-1643 adopts an RING-type; degenerate zinc-finger fold. 2 disordered regions span residues Val-1872–Gln-1902 and Ser-1935–Ser-1954. Positions Ser-1877 to Ala-1888 are enriched in low complexity.

Belongs to the E3 ubiquitin-protein ligase UBR1-like family. In terms of assembly, selectively interacts (via UBR-type zinc finger) with the cleaved form of Diap1; this interaction is enhanced by tal. Interacts with tal and Rrp1. Interacts with ovo isoform B (via N-terminus). Interacts with Cad99C (via the cytoplasmic domain). Interacts with ck and Sans. Interacts with cos (via Kinesin motor domain). In terms of processing, in vitro, self-ubiquitination in the presence of E1, E2 and ubiquitin.

It localises to the cytoplasm. It is found in the nucleus. It catalyses the reaction S-ubiquitinyl-[E2 ubiquitin-conjugating enzyme]-L-cysteine + [acceptor protein]-L-lysine = [E2 ubiquitin-conjugating enzyme]-L-cysteine + N(6)-ubiquitinyl-[acceptor protein]-L-lysine.. The protein operates within protein modification; protein ubiquitination. Its function is as follows. E3 ubiquitin-protein ligase which is a component of the N-end rule pathway. Recognizes and binds to proteins bearing specific N-terminal residues, leading to their ubiquitination and subsequent degradation. Binds to the E3 ubiquitin-protein ligase Diap1 and enhances its ubiquitination and anti-apoptotic functions. Essential during trichome development for the ubiquitination of the N-terminus of ovo isoform B (svb), converting it from a transcriptional inhibitor to an activator. Positively regulates a hh-signaling pathway which functions in photoreceptor differentiation. Activation of hh up-regulates transcription of Ubr3, which in turn promotes hh signaling by mediating the ubiquitination and degradation of cos. Necessary for auditory transduction: plays a role in Johnston's organ organization by acting in the regulation of zip and ck function in scolopidial apical attachment. Likely to function by acting in a pathway that negatively regulates the ubiquitination of zip, consequently affecting its interaction with ck. May also negatively regulate a component of the SCF (SKP1-CUL1-F-box protein) E3 ubiquitin-protein ligase complex Cul1, which also appears to function in the negative regulation of the zip-ck interaction and scolopidial apical attachment. The chain is E3 ubiquitin-protein ligase Ubr3 from Drosophila melanogaster (Fruit fly).